The following is a 305-amino-acid chain: Ribonuclease BN (305 aa).

Residues His-64, His-66, Asp-68, His-69, His-141, Asp-212, and His-270 each coordinate Zn(2+). Asp-68 acts as the Proton acceptor in catalysis.

Belongs to the RNase Z family. RNase BN subfamily. In terms of assembly, homodimer. It depends on Zn(2+) as a cofactor.

Functionally, zinc phosphodiesterase, which has both exoribonuclease and endoribonuclease activities. In Escherichia coli O127:H6 (strain E2348/69 / EPEC), this protein is Ribonuclease BN.